Reading from the N-terminus, the 334-residue chain is D-alanine--D-alanine ligase (334 aa).

The 207-residue stretch at 121–327 (KLWYDALDIP…FSEFLVQCVT (207 aa)) folds into the ATP-grasp domain. Position 151–206 (151–206 (AFGHWGSIFVKAARQGSSVGCYKVTTEDQIAPAIEAAFGFSEQVLVEQAVKPRELE)) interacts with ATP. Mg(2+) contacts are provided by Asp281, Glu294, and Asn296.

It belongs to the D-alanine--D-alanine ligase family. Requires Mg(2+) as cofactor. The cofactor is Mn(2+).

The protein resides in the cytoplasm. It catalyses the reaction 2 D-alanine + ATP = D-alanyl-D-alanine + ADP + phosphate + H(+). Its pathway is cell wall biogenesis; peptidoglycan biosynthesis. Functionally, cell wall formation. In Vibrio cholerae serotype O1 (strain ATCC 39315 / El Tor Inaba N16961), this protein is D-alanine--D-alanine ligase.